Here is a 373-residue protein sequence, read N- to C-terminus: Flagellar P-ring protein 1 (373 aa).

Residues 1 to 24 form the signal peptide; the sequence is MRGISRLYWSLVLICFAFAPIVEA.

The protein belongs to the FlgI family. In terms of assembly, the basal body constitutes a major portion of the flagellar organelle and consists of four rings (L,P,S, and M) mounted on a central rod.

The protein resides in the periplasm. It is found in the bacterial flagellum basal body. Its function is as follows. Assembles around the rod to form the L-ring and probably protects the motor/basal body from shearing forces during rotation. This chain is Flagellar P-ring protein 1, found in Hahella chejuensis (strain KCTC 2396).